Here is a 113-residue protein sequence, read N- to C-terminus: Cell cycle protein GpsB (113 aa).

The stretch at 36–65 (IKDYETYAALVKSLRQEIADLKEELARKPQ) forms a coiled coil. Residues 61-82 (ARKPQVSSAPSPSHPDPIDVAA) are disordered.

This sequence belongs to the GpsB family. As to quaternary structure, forms polymers through the coiled coil domains. Interacts with PBP1, MreC and EzrA.

Its subcellular location is the cytoplasm. Functionally, divisome component that associates with the complex late in its assembly, after the Z-ring is formed, and is dependent on DivIC and PBP2B for its recruitment to the divisome. Together with EzrA, is a key component of the system that regulates PBP1 localization during cell cycle progression. Its main role could be the removal of PBP1 from the cell pole after pole maturation is completed. Also contributes to the recruitment of PBP1 to the division complex. Not essential for septum formation. The chain is Cell cycle protein GpsB from Streptococcus pneumoniae (strain Hungary19A-6).